The chain runs to 509 residues: Dol-P-Glc:Glc(2)Man(9)GlcNAc(2)-PP-Dol alpha-1,2-glucosyltransferase (509 aa).

The Cytoplasmic portion of the chain corresponds to Met-1–Leu-4. Residues Ala-5–Val-25 traverse the membrane as a helical segment. The Lumenal portion of the chain corresponds to Pro-26–Pro-57. The helical transmembrane segment at Pro-58–Met-78 threads the bilayer. Topologically, residues Glu-79–Ala-99 are cytoplasmic. The helical transmembrane segment at Val-100 to Leu-120 threads the bilayer. The Lumenal portion of the chain corresponds to Ser-121–Lys-124. The chain crosses the membrane as a helical span at residues Ala-125–Tyr-145. Topologically, residues Tyr-146–Ser-170 are cytoplasmic. The helical transmembrane segment at Ala-171–Val-191 threads the bilayer. The Lumenal segment spans residues Ala-192–Pro-285. The tract at residues Gln-210–Ser-254 is disordered. Composition is skewed to polar residues over residues Glu-215–Ser-229 and Ser-239–Ser-254. Residues Phe-286–Gly-306 form a helical membrane-spanning segment. At Ala-307–His-311 the chain is on the cytoplasmic side. A helical transmembrane segment spans residues Val-312–Ala-332. Residues Pro-333–Ser-355 are Lumenal-facing. N-linked (GlcNAc...) asparagine glycosylation is present at Asn-351. A helical membrane pass occupies residues Leu-356–Ala-376. The Cytoplasmic portion of the chain corresponds to His-377 to Trp-400. A helical transmembrane segment spans residues Leu-401–Leu-421. At Ala-422–Thr-428 the chain is on the lumenal side. The chain crosses the membrane as a helical span at residues Trp-429–Phe-449. Over Arg-450–Thr-472 the chain is Cytoplasmic. The chain crosses the membrane as a helical span at residues Trp-473–Phe-493. Residues Arg-494 to Trp-509 are Lumenal-facing.

Belongs to the ALG10 glucosyltransferase family.

It is found in the endoplasmic reticulum membrane. It carries out the reaction an alpha-D-Glc-(1-&gt;3)-alpha-D-Glc-(1-&gt;3)-alpha-D-Man-(1-&gt;2)-alpha-D-Man-(1-&gt;2)-alpha-D-Man-(1-&gt;3)-[alpha-D-Man-(1-&gt;2)-alpha-D-Man-(1-&gt;3)-[alpha-D-Man-(1-&gt;2)-alpha-D-Man-(1-&gt;6)]-alpha-D-Man-(1-&gt;6)]-beta-D-Man-(1-&gt;4)-beta-D-GlcNAc-(1-&gt;4)-alpha-D-GlcNAc-diphospho-di-trans,poly-cis-dolichol + a di-trans,poly-cis-dolichyl beta-D-glucosyl phosphate = a alpha-D-Glc-(1-&gt;2)-alpha-D-Glc-(1-&gt;3)-alpha-D-Glc-(1-&gt;3)-alpha-D-Man-(1-&gt;2)-alpha-D-Man-(1-&gt;2)-alpha-D-Man-(1-&gt;3)-[alpha-D-Man-(1-&gt;2)-alpha-D-Man-(1-&gt;3)-[alpha-D-Man-(1-&gt;2)-alpha-D-Man-(1-&gt;6)]-alpha-D-Man-(1-&gt;6)]-beta-D-Man-(1-&gt;4)-beta-D-GlcNAc-(1-&gt;4)-alpha-D-GlcNAc-diphospho-di-trans,poly-cis-dolichol + a di-trans,poly-cis-dolichyl phosphate + H(+). It participates in protein modification; protein glycosylation. In terms of biological role, dol-P-Glc:Glc(2)Man(9)GlcNAc(2)-PP-Dol alpha-1,2-glucosyltransferase that operates in the biosynthetic pathway of dolichol-linked oligosaccharides, the glycan precursors employed in protein asparagine (N)-glycosylation. The assembly of dolichol-linked oligosaccharides begins on the cytosolic side of the endoplasmic reticulum membrane and finishes in its lumen. The sequential addition of sugars to dolichol pyrophosphate produces dolichol-linked oligosaccharides containing fourteen sugars, including two GlcNAcs, nine mannoses and three glucoses. Once assembled, the oligosaccharide is transferred from the lipid to nascent proteins by oligosaccharyltransferases. In the lumen of the endoplasmic reticulum, adds the third and last glucose residue from dolichyl phosphate glucose (Dol-P-Glc) onto the lipid-linked oligosaccharide intermediate Glc(2)Man(9)GlcNAc(2)-PP-Dol to produce Glc(3)Man(9)GlcNAc(2)-PP-Dol. The protein is Dol-P-Glc:Glc(2)Man(9)GlcNAc(2)-PP-Dol alpha-1,2-glucosyltransferase of Arabidopsis thaliana (Mouse-ear cress).